The following is a 99-amino-acid chain: Plastocyanin A'/A'' (99 aa).

The Plastocyanin-like domain maps to 1 to 99 (IEVLLGSDDG…AGMVGKVTVN (99 aa)). Residues H37, C84, H87, and M92 each coordinate Cu cation.

The protein belongs to the plastocyanin family. Cu(2+) is required as a cofactor.

It localises to the plastid. Its subcellular location is the chloroplast thylakoid membrane. In terms of biological role, participates in electron transfer between P700 and the cytochrome b6-f complex in photosystem I. This is Plastocyanin A'/A'' from Nicotiana tabacum (Common tobacco).